Consider the following 359-residue polypeptide: N-acetyl-gamma-glutamyl-phosphate reductase (359 aa).

The active site involves C162.

It belongs to the NAGSA dehydrogenase family. Type 1 subfamily.

It localises to the cytoplasm. It carries out the reaction N-acetyl-L-glutamate 5-semialdehyde + phosphate + NADP(+) = N-acetyl-L-glutamyl 5-phosphate + NADPH + H(+). It participates in amino-acid biosynthesis; L-arginine biosynthesis; N(2)-acetyl-L-ornithine from L-glutamate: step 3/4. In terms of biological role, catalyzes the NADPH-dependent reduction of N-acetyl-5-glutamyl phosphate to yield N-acetyl-L-glutamate 5-semialdehyde. The sequence is that of N-acetyl-gamma-glutamyl-phosphate reductase from Prochlorococcus marinus (strain MIT 9211).